Here is a 251-residue protein sequence, read N- to C-terminus: MSVSPVSIVSTPVAVSASPAGAPDQPVQPVTVRWRGREAYEASFDAMRAFTDTRTADTGDEIWVVEHPPVYTLGQAGDPAHLLVADSGVPLVKVDRGGQITYHGPGQIVVYLLLDLRRRKLMVRALVTKIEEAVIETLAAYNLASVRKAGAPGIYVASGVHEGAKIAALGLKIRNGCSYHGLSLNVKMDLRPFLAINPCGYAGLETVDMASLEVAADWNDVAHTLVGRLIANLDGASAAADKPHALEQSND.

In terms of domain architecture, BPL/LPL catalytic spans 56–241 (ADTGDEIWVV…NLDGASAAAD (186 aa)). Substrate contacts are provided by residues 96–103 (RGGQITYH), 168–170 (ALG), and 181–183 (GLS). Cysteine 199 serves as the catalytic Acyl-thioester intermediate.

The protein belongs to the LipB family.

It localises to the cytoplasm. It catalyses the reaction octanoyl-[ACP] + L-lysyl-[protein] = N(6)-octanoyl-L-lysyl-[protein] + holo-[ACP] + H(+). Its pathway is protein modification; protein lipoylation via endogenous pathway; protein N(6)-(lipoyl)lysine from octanoyl-[acyl-carrier-protein]: step 1/2. Catalyzes the transfer of endogenously produced octanoic acid from octanoyl-acyl-carrier-protein onto the lipoyl domains of lipoate-dependent enzymes. Lipoyl-ACP can also act as a substrate although octanoyl-ACP is likely to be the physiological substrate. In Burkholderia orbicola (strain AU 1054), this protein is Octanoyltransferase.